Here is a 91-residue protein sequence, read N- to C-terminus: UPF0250 protein PSPTO_4820 (91 aa).

This sequence belongs to the UPF0250 family.

This chain is UPF0250 protein PSPTO_4820, found in Pseudomonas syringae pv. tomato (strain ATCC BAA-871 / DC3000).